The sequence spans 544 residues: U1 small nuclear ribonucleoprotein component PRP42 (544 aa).

HAT repeat units lie at residues 7 to 39 (LIHD…YIVK), 51 to 83 (QLLK…LEYK), 85 to 118 (GNVS…FCNN), 121 to 156 (SHQK…QISS), and 163 to 195 (KYWN…DIMD). Residues 230–235 (KKKLKK) carry the Nuclear localization signal motif. HAT repeat units follow at residues 255–288 (FESK…YTIT), 290–322 (QTDS…WLIN), 366–397 (NLLE…FKTF), and 456–488 (VEKN…LIYF).

Component of the 18S U1 snRNP particle, a subcomplex of the spliceosome.

It is found in the nucleus. In terms of biological role, essential component of the U1 snRNP particle, which recognizes and binds the 5'-splice site of pre-mRNA. Together with other non-snRNP factors, U1 snRNP forms the spliceosomal commitment complex, that targets pre-mRNA to the splicing pathway. U1 snRNP is cotranscriptionally recruited to intron-containing genes. Required for U1 snRNP biogenesis. This Saccharomyces cerevisiae (strain ATCC 204508 / S288c) (Baker's yeast) protein is U1 small nuclear ribonucleoprotein component PRP42 (PRP42).